The following is a 578-amino-acid chain: Putative diflavin flavoprotein A 2 (578 aa).

The segment at 48–240 (RHGTTYNSFL…LQVVLVATGH (193 aa)) is zinc metallo-hydrolase. Fe cation-binding residues include histidine 97, glutamate 99, aspartate 101, histidine 164, aspartate 183, and histidine 240. The Flavodoxin-like domain maps to 269–406 (VALFYVDGYG…LCREAGTDLG (138 aa)). The flavodoxin-reductase-like stretch occupies residues 429–578 (IGRLSTGLYI…THHRKLGNHY (150 aa)).

The protein in the N-terminal section; belongs to the zinc metallo-hydrolase group 3 family. This sequence in the C-terminal section; belongs to the flavodoxin reductase family. Requires Fe cation as cofactor.

In terms of biological role, mediates electron transfer from NADH to oxygen, reducing it to water. This modular protein has 3 redox cofactors, in other organisms the same activity requires 2 or 3 proteins. The chain is Putative diflavin flavoprotein A 2 (dfa2) from Synechocystis sp. (strain ATCC 27184 / PCC 6803 / Kazusa).